Consider the following 309-residue polypeptide: Cutinase (309 aa).

The signal sequence occupies residues 1–47 (MSALTSQPTSSGSSEKIPRLRGWRAKAAGVVLAALALTTGVAAPAPA). Residue Ser-178 is the Nucleophile of the active site. Residues Asp-224 and His-256 each act as charge relay system in the active site. Cys-289 and Cys-305 are joined by a disulfide.

It belongs to the AB hydrolase superfamily.

It localises to the secreted. The catalysed reaction is a carboxylic ester + H2O = an alcohol + a carboxylate + H(+). It catalyses the reaction a triacylglycerol + H2O = a diacylglycerol + a fatty acid + H(+). The enzyme catalyses 1,2,3-tri-(9Z-octadecenoyl)-glycerol + H2O = di-(9Z)-octadecenoylglycerol + (9Z)-octadecenoate + H(+). It carries out the reaction (6-hydroxyhexanoyl)(n) + H2O = (6-hydroxyhexanoyl)(n-1) + 6-hydroxyhexanoate + H(+). The catalysed reaction is cutin + H2O = cutin monomers.. No effect on activity by SDS or chelating agents ethylenediaminetetraacetic acid (EDTA) or sodium citrate. No effect on activity by metal ions Ag(+), Ba(2+), Ca(2+), Co(2+), Cu(2+), Mn(2+), Ni(2+), Pb(2+) or Zn(2+). Activated by 1 mM digitonin and sodium deoxycholate, and reducing agents 1 mM 1,4-dithiothreitol, beta-mercaptoethanol and ascorbic acid. Activated by benzene, n-hexane, p-xylene and toluene. Activated by Fe(3+). Inhibited slightly by 1 mM of different chain length fatty acids, and only marginally by 6.0 M urea. Inhibited strongly with chemical modification by reagents phenyl methyl sulfonylfluorid (PMSF), 1-ethyl-3-(3-dimethylaminopropyl) carbodiimide (EDAC), diethylpyrocarbonate (DEPC) and N-bromosuccinimide (NBS). Inhibited by pyridine, DMSO, t-butanol and dodecane. Inhibited by Li(+), Hg(2+) and Mg(2+). No inhibition with chemical modification by reagents N-acetylimidazole (NAI), citraconic anhydride (CA), iodoacetate (IA) and phenylglyoxal (PG). In terms of biological role, catalyzes the hydrolysis of cutin, a polyester that forms the structure of plant cuticle. Shows esterase activity towards p-nitrophenol-linked aliphatic esters (pNP-aliphatic esters). Has a preference for medium chain length (C-4 to C-12) fatty acid esters. Active with p-nitrophenyl palmitate (p-NPP) as substrate. Hydrolyzes triacylglycerol substrates non-specifically with a preference for long, unsaturated fatty acyl chains with the highest activity for triolein. Substrates with cis-9 unsaturation are preferred over the saturated triacylglycerols. Hydrolyzes a wide range of natural oils, especially olive oil, with relatively high activity. Capable of catalyzing synthesis of the flavor ester isoamyl acetate by esterification of isoamyl alcohol using acetic acid as an acyl donor. Degrades synthetic aliphatic polyesters, namely poly(1,4-butylene succinate) extended with 1,6-diisocyanatohexane (PBSc-D) and poly(epsilon-caprolactone) (PCL) plastics. Does not degrade poly(lactic acid) (PLA) nor aromatic poly(ethylene terephthalate) (PET), the most abundant polyester plastic in the world. The sequence is that of Cutinase from Amycolatopsis mediterranei (strain S699) (Nocardia mediterranei).